A 376-amino-acid polypeptide reads, in one-letter code: Ribonucleoside-diphosphate reductase subunit beta (376 aa).

Fe cation-binding residues include D85, E116, and H119. Residue Y123 is part of the active site. Fe cation-binding residues include E205, E239, and H242.

It belongs to the ribonucleoside diphosphate reductase small chain family. Tetramer of two alpha and two beta subunits. It depends on Fe cation as a cofactor.

It catalyses the reaction a 2'-deoxyribonucleoside 5'-diphosphate + [thioredoxin]-disulfide + H2O = a ribonucleoside 5'-diphosphate + [thioredoxin]-dithiol. Provides the precursors necessary for DNA synthesis. Catalyzes the biosynthesis of deoxyribonucleotides from the corresponding ribonucleotides. The chain is Ribonucleoside-diphosphate reductase subunit beta (nrdB) from Buchnera aphidicola subsp. Baizongia pistaciae (strain Bp).